The sequence spans 531 residues: Beta-hexosaminidase subunit beta (531 aa).

The signal sequence occupies residues 1–24 (MRHRGLGLAALLALLAAVAPRSSA). Asn50 is a glycosylation site (N-linked (GlcNAc...) asparagine). Cys65 and Cys111 are joined by a disulfide. Residues Asn116, Asn164, and Asn301 are each glycosylated (N-linked (GlcNAc...) asparagine). 2 disulfides stabilise this stretch: Cys283–Cys334 and Cys508–Cys525. The active-site Proton donor is the Glu329.

The protein belongs to the glycosyl hydrolase 20 family. As to quaternary structure, there are 3 forms of beta-hexosaminidase: hexosaminidase A is a heterodimer composed of one subunit alpha and one subunit beta (chain A and B); hexosaminidase B is a homodimer of two beta subunits (two chains A and B); hexosaminidase S is a homodimer of two alpha subunits. The composition of the dimer (isozyme A versus isozyme S) has a significant effect on the substrate specificity of the alpha subunit active site.

The protein resides in the lysosome. The protein localises to the cytoplasmic vesicle. It localises to the secretory vesicle. It is found in the cortical granule. It carries out the reaction Hydrolysis of terminal non-reducing N-acetyl-D-hexosamine residues in N-acetyl-beta-D-hexosaminides.. The enzyme catalyses N-acetyl-beta-D-galactosaminyl-(1-&gt;4)-beta-D-3-sulfogalactosyl-(1-&gt;4)-beta-D-glucosyl-(1&lt;-&gt;1')-ceramide + H2O = a beta-D-3-sulfogalactosyl-(1-&gt;4)-beta-D-glucosyl-(1&lt;-&gt;1')-ceramide + N-acetyl-beta-D-galactosamine. The catalysed reaction is a ganglioside GM2 (d18:1(4E)) + H2O = a ganglioside GM3 (d18:1(4E)) + N-acetyl-beta-D-galactosamine. It catalyses the reaction a ganglioside GM2 + H2O = a ganglioside GM3 + N-acetyl-beta-D-galactosamine. It carries out the reaction beta-D-GalNAc-(1-&gt;4)-alpha-L-IdoA-(1-&gt;3)-beta-D-GalNAc-4-sulfate-(1-&gt;4)-alpha-L-IdoA-(1-&gt;3)-D-GalNAc-4-sulfate + H2O = alpha-L-IdoA-(1-&gt;3)-beta-D-GalNAc-4-sulfate-(1-&gt;4)-alpha-L-IdoA-(1-&gt;3)-D-GalNAc-4-sulfate + N-acetyl-D-galactosamine. The enzyme catalyses N-acetyl-beta-D-6-sulfogalactosaminyl-(1-&gt;4)-alpha-L-iduronyl-(1-&gt;3)-N-acetyl-D-6-sulfogalactosamine + H2O = alpha-L-iduronyl-(1-&gt;3)-N-acetyl-D-6-sulfogalactosamine + N-acetyl-D-6-sulfogalactosamine. Its activity is regulated as follows. Addition of GM2A stimulates the hydrolysis of sulfated glycosphingolipid SM2 and the ganglioside GM2. Functionally, hydrolyzes the non-reducing end N-acetyl-D-hexosamine and/or sulfated N-acetyl-D-hexosamine of glycoconjugates, such as the oligosaccharide moieties from proteins and neutral glycolipids, or from certain mucopolysaccharides. The isozyme B does not hydrolyze each of these substrates, however hydrolyzes efficiently neutral oligosaccharide. Only the isozyme A is responsible for the degradation of GM2 gangliosides in the presence of GM2A. During fertilization is responsible, at least in part, for the zona block to polyspermy. Present in the cortical granules of non-activated oocytes, is exocytosed during the cortical reaction in response to oocyte activation and inactivates the sperm galactosyltransferase-binding site, accounting for the block in sperm binding to the zona pellucida. In Felis catus (Cat), this protein is Beta-hexosaminidase subunit beta.